The sequence spans 430 residues: Enolase (430 aa).

Q167 provides a ligand contact to (2R)-2-phosphoglycerate. The active-site Proton donor is the E209. Mg(2+) contacts are provided by D246, E287, and D314. Positions 339, 368, and 369 each coordinate (2R)-2-phosphoglycerate. K339 functions as the Proton acceptor in the catalytic mechanism.

The protein belongs to the enolase family. It depends on Mg(2+) as a cofactor.

The protein resides in the cytoplasm. It localises to the secreted. It is found in the cell surface. It catalyses the reaction (2R)-2-phosphoglycerate = phosphoenolpyruvate + H2O. Its pathway is carbohydrate degradation; glycolysis; pyruvate from D-glyceraldehyde 3-phosphate: step 4/5. Catalyzes the reversible conversion of 2-phosphoglycerate (2-PG) into phosphoenolpyruvate (PEP). It is essential for the degradation of carbohydrates via glycolysis. The polypeptide is Enolase (Synechococcus sp. (strain ATCC 27144 / PCC 6301 / SAUG 1402/1) (Anacystis nidulans)).